A 580-amino-acid polypeptide reads, in one-letter code: Netrin-3 (580 aa).

Positions 1 to 27 are cleaved as a signal peptide; sequence MPGWPWGLLLTAGTLFAALSPGPPAPA. Residues 36-254 enclose the Laminin N-terminal domain; the sequence is APRGCVPGLV…AATDLQVGGR (219 aa). Residues 62–83 are disordered; that stretch reads PATRACDASDPRRAHSPALLTS. Intrachain disulfides connect Cys-92/Cys-125, Cys-255/Cys-264, Cys-257/Cys-274, Cys-276/Cys-285, Cys-288/Cys-308, Cys-311/Cys-320, Cys-313/Cys-338, Cys-341/Cys-350, Cys-353/Cys-371, Cys-374/Cys-386, Cys-376/Cys-393, Cys-395/Cys-404, Cys-407/Cys-421, Cys-441/Cys-514, and Cys-460/Cys-577. N-linked (GlcNAc...) asparagine glycosylation is present at Asn-104. 3 consecutive Laminin EGF-like domains span residues 255 to 308, 311 to 371, and 374 to 421; these read CKCN…SHAC, CSCN…RRAC, and CDCH…VAPC. An N-linked (GlcNAc...) asparagine glycan is attached at Asn-387. Residues 441 to 577 form the NTR domain; sequence CDSHCKPARG…LQRRERRGRC (137 aa). The Cell attachment site; atypical signature appears at 500–502; it reads RGS.

In terms of tissue distribution, spinal cord.

The protein localises to the secreted. It is found in the extracellular space. It localises to the extracellular matrix. Functionally, netrins control guidance of CNS commissural axons and peripheral motor axons. The protein is Netrin-3 (NTN3) of Homo sapiens (Human).